The primary structure comprises 124 residues: Large ribosomal subunit protein bL12 (124 aa).

The protein belongs to the bacterial ribosomal protein bL12 family. In terms of assembly, homodimer. Part of the ribosomal stalk of the 50S ribosomal subunit. Forms a multimeric L10(L12)X complex, where L10 forms an elongated spine to which 2 to 4 L12 dimers bind in a sequential fashion. Binds GTP-bound translation factors.

Forms part of the ribosomal stalk which helps the ribosome interact with GTP-bound translation factors. Is thus essential for accurate translation. The protein is Large ribosomal subunit protein bL12 of Rickettsia akari (strain Hartford).